A 441-amino-acid polypeptide reads, in one-letter code: AP-2 complex subunit mu (441 aa).

Positions Arg174 to Arg440 constitute an MHD domain.

It belongs to the adapter complexes medium subunit family. In terms of assembly, adapter protein complex 2 (AP-2) is a heterotetramer composed of two large adaptins (alpha-type subunit and beta-type subunits), a medium adaptin (mu-type subunit AP50) and a small adaptin (sigma-type subunit AP17). Brain, heart, lung, liver, testis and spleen.

The protein localises to the cell membrane. It is found in the membrane. Its subcellular location is the coated pit. Component of the adapter complexes which link clathrin to receptors in coated vesicles. Clathrin-associated protein complexes are believed to interact with the cytoplasmic tails of membrane proteins, leading to their selection and concentration. AP50 is a subunit of the plasma membrane adapter. Essential wnt/egl-20 signaling protein that functions in wnt/egl-20-producing cells. Required for the AP-2 complex-mediated endocytosis of membrane proteins including wntless homolog mig-14 in egl-20-producing cells. During development, regulates the migration of HSN neurons and the left and right Q neuroblasts (QL and QR, respectively) and their descendants, possibly through hox gene and wnt/egl-20 gene target mab-5, and plays a role in establishing ALM and PLM neuronal cell polarity. Regulates AWB sensory neuron cilia membrane expansion during development, potentially via localization of tub-1 and PtdIns(4,5)P2 to the ciliary base. Required for the asymmetric divisions of V5 cells. The protein is AP-2 complex subunit mu (dpy-23) of Caenorhabditis elegans.